The primary structure comprises 44 residues: Small, acid-soluble spore protein N (44 aa).

Residues 1-44 are disordered; it reads MGNPKKNSKDFAPNHIGTQSKKAGGNKGKQMQDQTGKQPIVDNG.

Belongs to the SspN family.

The protein resides in the spore core. The chain is Small, acid-soluble spore protein N from Bacillus anthracis (strain A0248).